Here is a 425-residue protein sequence, read N- to C-terminus: Succinyl-diaminopimelate desuccinylase (425 aa).

A Zn(2+)-binding site is contributed by His-96. The active site involves Asp-98. Asp-129 is a binding site for Zn(2+). Residue Glu-163 is the Proton acceptor of the active site. Zn(2+) contacts are provided by Glu-164, Glu-192, and His-378.

The protein belongs to the peptidase M20A family. DapE subfamily. In terms of assembly, homodimer. Requires Zn(2+) as cofactor. It depends on Co(2+) as a cofactor.

It carries out the reaction N-succinyl-(2S,6S)-2,6-diaminopimelate + H2O = (2S,6S)-2,6-diaminopimelate + succinate. It functions in the pathway amino-acid biosynthesis; L-lysine biosynthesis via DAP pathway; LL-2,6-diaminopimelate from (S)-tetrahydrodipicolinate (succinylase route): step 3/3. In terms of biological role, catalyzes the hydrolysis of N-succinyl-L,L-diaminopimelic acid (SDAP), forming succinate and LL-2,6-diaminopimelate (DAP), an intermediate involved in the bacterial biosynthesis of lysine and meso-diaminopimelic acid, an essential component of bacterial cell walls. The polypeptide is Succinyl-diaminopimelate desuccinylase (Polaromonas sp. (strain JS666 / ATCC BAA-500)).